Consider the following 160-residue polypeptide: Protein MGF 300-2R (160 aa).

Belongs to the asfivirus MGF 300 family.

Its function is as follows. Plays a role in virus cell tropism, and may be required for efficient virus replication in macrophages. The sequence is that of Protein MGF 300-2R from African swine fever virus (isolate Tick/Malawi/Lil 20-1/1983) (ASFV).